We begin with the raw amino-acid sequence, 341 residues long: Phosphoribosylformylglycinamidine cyclo-ligase (341 aa).

It belongs to the AIR synthase family.

It is found in the cytoplasm. The enzyme catalyses 2-formamido-N(1)-(5-O-phospho-beta-D-ribosyl)acetamidine + ATP = 5-amino-1-(5-phospho-beta-D-ribosyl)imidazole + ADP + phosphate + H(+). It participates in purine metabolism; IMP biosynthesis via de novo pathway; 5-amino-1-(5-phospho-D-ribosyl)imidazole from N(2)-formyl-N(1)-(5-phospho-D-ribosyl)glycinamide: step 2/2. This Agathobacter rectalis (strain ATCC 33656 / DSM 3377 / JCM 17463 / KCTC 5835 / VPI 0990) (Eubacterium rectale) protein is Phosphoribosylformylglycinamidine cyclo-ligase.